The primary structure comprises 454 residues: Bifunctional protein GlmU (454 aa).

The pyrophosphorylase stretch occupies residues 1–232; it reads MTDRTCLSIV…VDNVIGINNR (232 aa). Residues 11–14, lysine 25, glutamine 78, and 83–84 each bind UDP-N-acetyl-alpha-D-glucosamine; these read LAAG and GT. Residue aspartate 108 participates in Mg(2+) binding. Residues glycine 144, glutamate 158, asparagine 173, and asparagine 230 each contribute to the UDP-N-acetyl-alpha-D-glucosamine site. Mg(2+) is bound at residue asparagine 230. The segment at 233 to 253 is linker; that stretch reads AELAEAETIWQNRKRRELMLS. Positions 254–454 are N-acetyltransferase; that stretch reads GVTLIAPETV…AIKAAKSVSK (201 aa). UDP-N-acetyl-alpha-D-glucosamine is bound by residues arginine 319 and lysine 337. Catalysis depends on histidine 349, which acts as the Proton acceptor. Residues tyrosine 352 and asparagine 363 each coordinate UDP-N-acetyl-alpha-D-glucosamine. Acetyl-CoA-binding positions include alanine 366, 372 to 373, serine 391, serine 409, and arginine 426; that span reads NY.

This sequence in the N-terminal section; belongs to the N-acetylglucosamine-1-phosphate uridyltransferase family. It in the C-terminal section; belongs to the transferase hexapeptide repeat family. Homotrimer. Mg(2+) serves as cofactor.

Its subcellular location is the cytoplasm. The enzyme catalyses alpha-D-glucosamine 1-phosphate + acetyl-CoA = N-acetyl-alpha-D-glucosamine 1-phosphate + CoA + H(+). It catalyses the reaction N-acetyl-alpha-D-glucosamine 1-phosphate + UTP + H(+) = UDP-N-acetyl-alpha-D-glucosamine + diphosphate. It functions in the pathway nucleotide-sugar biosynthesis; UDP-N-acetyl-alpha-D-glucosamine biosynthesis; N-acetyl-alpha-D-glucosamine 1-phosphate from alpha-D-glucosamine 6-phosphate (route II): step 2/2. It participates in nucleotide-sugar biosynthesis; UDP-N-acetyl-alpha-D-glucosamine biosynthesis; UDP-N-acetyl-alpha-D-glucosamine from N-acetyl-alpha-D-glucosamine 1-phosphate: step 1/1. Its pathway is bacterial outer membrane biogenesis; LPS lipid A biosynthesis. In terms of biological role, catalyzes the last two sequential reactions in the de novo biosynthetic pathway for UDP-N-acetylglucosamine (UDP-GlcNAc). The C-terminal domain catalyzes the transfer of acetyl group from acetyl coenzyme A to glucosamine-1-phosphate (GlcN-1-P) to produce N-acetylglucosamine-1-phosphate (GlcNAc-1-P), which is converted into UDP-GlcNAc by the transfer of uridine 5-monophosphate (from uridine 5-triphosphate), a reaction catalyzed by the N-terminal domain. In Brucella melitensis biotype 1 (strain ATCC 23456 / CCUG 17765 / NCTC 10094 / 16M), this protein is Bifunctional protein GlmU.